The sequence spans 333 residues: D-fructose 1,6-bisphosphatase class 2/sedoheptulose 1,7-bisphosphatase (333 aa).

Positions 33, 57, 85, and 88 each coordinate Mn(2+). Residues 88 to 90 (EGT), Tyr119, 164 to 166 (RTR), and 186 to 188 (DGD) each bind substrate. Position 213 (Glu213) interacts with Mn(2+).

This sequence belongs to the FBPase class 2 family. In terms of assembly, homotetramer. Mn(2+) serves as cofactor.

The catalysed reaction is beta-D-fructose 1,6-bisphosphate + H2O = beta-D-fructose 6-phosphate + phosphate. The enzyme catalyses D-sedoheptulose 1,7-bisphosphate + H2O = D-sedoheptulose 7-phosphate + phosphate. It functions in the pathway carbohydrate biosynthesis; Calvin cycle. Its function is as follows. Catalyzes the hydrolysis of fructose 1,6-bisphosphate (Fru 1,6-P2) and sedoheptulose 1,7-bisphosphate (Sed 1,7-P2) to fructose 6-phosphate and sedoheptulose 7-phosphate, respectively. This chain is D-fructose 1,6-bisphosphatase class 2/sedoheptulose 1,7-bisphosphatase, found in Prochlorococcus marinus (strain MIT 9301).